Here is a 689-residue protein sequence, read N- to C-terminus: Methionine--tRNA ligase (689 aa).

The short motif at 15 to 25 (PYANGPIHLGH) is the 'HIGH' region element. Residues Cys-146, Cys-149, Cys-159, and Cys-162 each coordinate Zn(2+). Positions 332–336 (KMSKS) match the 'KMSKS' region motif. Lys-335 contacts ATP. Residues 554 to 574 (DAPKTAAPEKTAEASSVSSEP) form a disordered region. Residues 588 to 689 (DFAKIDLRIA…EGAQPGMRVK (102 aa)) form the tRNA-binding domain.

This sequence belongs to the class-I aminoacyl-tRNA synthetase family. MetG type 1 subfamily. As to quaternary structure, homodimer. Zn(2+) serves as cofactor.

Its subcellular location is the cytoplasm. It carries out the reaction tRNA(Met) + L-methionine + ATP = L-methionyl-tRNA(Met) + AMP + diphosphate. Functionally, is required not only for elongation of protein synthesis but also for the initiation of all mRNA translation through initiator tRNA(fMet) aminoacylation. The protein is Methionine--tRNA ligase of Shewanella baltica (strain OS185).